A 413-amino-acid chain; its full sequence is Tyrosine--tRNA ligase (413 aa).

Tyr34 provides a ligand contact to L-tyrosine. A 'HIGH' region motif is present at residues 39–48 (CTAQSLHVGN). The L-tyrosine site is built by Tyr171 and Gln175. The short motif at 231 to 235 (KMGKT) is the 'KMSKS' region element. Lys234 provides a ligand contact to ATP. Residues 346–411 (IPITELLVTI…GKKCHILVKI (66 aa)) enclose the S4 RNA-binding domain.

The protein belongs to the class-I aminoacyl-tRNA synthetase family. TyrS type 1 subfamily. As to quaternary structure, homodimer.

It is found in the cytoplasm. It catalyses the reaction tRNA(Tyr) + L-tyrosine + ATP = L-tyrosyl-tRNA(Tyr) + AMP + diphosphate + H(+). Functionally, catalyzes the attachment of tyrosine to tRNA(Tyr) in a two-step reaction: tyrosine is first activated by ATP to form Tyr-AMP and then transferred to the acceptor end of tRNA(Tyr). This is Tyrosine--tRNA ligase from Orientia tsutsugamushi (strain Ikeda) (Rickettsia tsutsugamushi).